The primary structure comprises 715 residues: Polyribonucleotide nucleotidyltransferase (715 aa).

Residues D485 and D491 each coordinate Mg(2+). A KH domain is found at 552–611 (PRIHTMKIDPKKIKDVIGKGGAVIRALTEETGTSIDIDDDGTVKIAATDNNAAKAVMARI). The region spanning 621-689 (NAIYKGKVTR…RQNRIRLTMK (69 aa)) is the S1 motif domain. The segment at 695-715 (TPVAENVTEEAEVSSEQQAEI) is disordered.

It belongs to the polyribonucleotide nucleotidyltransferase family. As to quaternary structure, component of the RNA degradosome, which is a multiprotein complex involved in RNA processing and mRNA degradation. Mg(2+) is required as a cofactor.

It is found in the cytoplasm. It catalyses the reaction RNA(n+1) + phosphate = RNA(n) + a ribonucleoside 5'-diphosphate. Functionally, involved in mRNA degradation. Catalyzes the phosphorolysis of single-stranded polyribonucleotides processively in the 3'- to 5'-direction. The polypeptide is Polyribonucleotide nucleotidyltransferase (Actinobacillus pleuropneumoniae serotype 7 (strain AP76)).